A 138-amino-acid polypeptide reads, in one-letter code: Large ribosomal subunit protein mL54 (138 aa).

A mitochondrion-targeting transit peptide spans 1–16 (MAARRLFGATGSWARW).

The protein belongs to the mitochondrion-specific ribosomal protein mL54 family. As to quaternary structure, component of the mitochondrial ribosome large subunit (39S) which comprises a 16S rRNA and about 50 distinct proteins.

The protein localises to the mitochondrion. The chain is Large ribosomal subunit protein mL54 (MRPL54) from Bos taurus (Bovine).